We begin with the raw amino-acid sequence, 404 residues long: Cytoplasmic 60S subunit biogenesis factor REI1 homolog 1 (404 aa).

C2H2-type zinc fingers lie at residues Leu4 to His28 and Tyr68 to His92. Residues Gln119–Asp169 are disordered. 2 stretches are compositionally biased toward acidic residues: residues Asp125–Ser147 and Ser160–Asp169. 2 C2H2-type zinc fingers span residues Thr178 to His201 and Phe229 to His256.

It belongs to the REI1 family. Can form homodimer. Interacts with RLP24, RPL24A, RPL24B, EBP1 and JJJ1.

It localises to the cytoplasm. Pre-60S-associated factor involved in the cytoplasmic maturation of the 60S subunit. Involved in the dissociation and recycling of other late pre-60S factors before newly synthesized large ribosomal subunits enter translation. Can complement the growth defect of a yeast mutant lacking REI1. Required for leaf growth under cold temperature conditions. This is Cytoplasmic 60S subunit biogenesis factor REI1 homolog 1 from Arabidopsis thaliana (Mouse-ear cress).